Here is a 411-residue protein sequence, read N- to C-terminus: Signal-transducing adaptor protein 2 (411 aa).

Residues 20 to 120 form the PH domain; the sequence is HYYESFLEKK…GFILTVVELR (101 aa). The residue at position 22 (tyrosine 22) is a Phosphotyrosine. Residues 152–248 enclose the SH2 domain; it reads WCFLQVSRLE…RALVPFLLDE (97 aa). Tyrosine 250 is subject to Phosphotyrosine; by PTK6. Residues 291-320 form a disordered region; the sequence is VPVSVSSQEDKLPQLPPLPQLPDTDENYVT. Residues tyrosine 318 and tyrosine 330 each carry the phosphotyrosine modification. Residues 338 to 364 form a disordered region; that stretch reads SSQAVPLKPKKPARLPAKPPKPSVVPK. Residues 390–410 adopt a coiled-coil conformation; that stretch reads TRLGDITAELEEKLQKRRALE.

As to quaternary structure, interacts with PTK6 and CSF1R. In terms of processing, phosphorylated on tyrosine. Phosphorylated by PTK6 at Tyr-250 modulates PTK6-mediated STAT3 activation. As to expression, widely expressed.

The protein localises to the cytoplasm. It is found in the membrane. In terms of biological role, substrate of protein kinase PTK6. May play a regulatory role in the acute-phase response in systemic inflammation and may modulate STAT3 activity. This chain is Signal-transducing adaptor protein 2 (Stap2), found in Mus musculus (Mouse).